Consider the following 1516-residue polypeptide: Mediator of RNA polymerase II transcription subunit 14 (1516 aa).

Disordered stretches follow at residues 22-98 and 1434-1516; these read LSSQ…EVPA and MHRQ…YPPQ. Over residues 34–47 the composition is skewed to low complexity; sequence SPAAPISPAPSGSA. Residues 72–83 show a composition bias toward basic and acidic residues; the sequence is SEVDVKSIHSSD. Residues 1463-1473 are compositionally biased toward low complexity; that stretch reads SHQQHMMNPGS. Over residues 1474–1483 the composition is skewed to gly residues; the sequence is VGPGSVGGPG. Residues 1502–1516 show a composition bias toward low complexity; sequence QSYHHPLHHQQYPPQ.

Belongs to the Mediator complex subunit 14 family. As to quaternary structure, component of the Mediator complex.

The protein localises to the nucleus. Its function is as follows. Component of the Mediator complex, a coactivator involved in the regulated transcription of nearly all RNA polymerase II-dependent genes. Mediator functions as a bridge to convey information from gene-specific regulatory proteins to the basal RNA polymerase II transcription machinery. Mediator is recruited to promoters by direct interactions with regulatory proteins and serves as a scaffold for the assembly of a functional preinitiation complex with RNA polymerase II and the general transcription factors. Required for transcription in the embryo and for phosphorylation of the RNA polymerase II C-terminal domain repeat. The chain is Mediator of RNA polymerase II transcription subunit 14 (rgr-1) from Caenorhabditis elegans.